Here is a 29-residue protein sequence, read N- to C-terminus: MKIKFVFDLLTPDDILHPSNHVNLIIRPI.

The protein belongs to the coronaviruses ns4.9 protein family.

This chain is Truncated non-structural protein of 4.9 kDa, found in Bovine coronavirus (strain 98TXSF-110-LUN) (BCoV-LUN).